We begin with the raw amino-acid sequence, 244 residues long: Small ribosomal subunit protein eS4 (244 aa).

The S4 RNA-binding domain maps to 43–106 (LPLLLVVRDI…DENYLVLFDE (64 aa)).

It belongs to the eukaryotic ribosomal protein eS4 family.

In Methanococcus maripaludis (strain C6 / ATCC BAA-1332), this protein is Small ribosomal subunit protein eS4.